The primary structure comprises 1000 residues: C2 domain-containing protein 5 (1000 aa).

The C2 domain maps to 1-109 (MPGKLKVKIV…EAATVISGWF (109 aa)). Asp19, Asp26, Asp76, Asp78, Ser81, and Asp84 together coordinate Ca(2+). Ser197 carries the post-translational modification Phosphoserine; by PKB/AKT2. Phosphoserine occurs at positions 200 and 260. The segment at 265 to 330 (MKEIPFNEDP…SGSAGKEGGP (66 aa)) is disordered. Polar residues predominate over residues 274–289 (PNPNTHSSGPSTPLKN). Positions 290–318 (QTYSFSPSKSYSRQSSSSDTDLSLTPKTG) are enriched in low complexity. A phosphoserine mark is found at Ser293, Ser295, Ser304, Ser305, and Ser306. Thr317 is subject to Phosphothreonine. Residues 319 to 328 (MGSGSAGKEG) show a composition bias toward gly residues. Position 323 is a phosphoserine (Ser323). Thr601 is subject to Phosphothreonine. The segment at 639–669 (EIIGSPIPEPRQRSRLLRSQSESSDEVTELD) is disordered. Phosphoserine is present on residues Ser643, Ser657, Ser659, Ser661, and Ser662. Thr666 bears the Phosphothreonine mark. Ser671 carries the phosphoserine modification. Residue Thr807 is modified to Phosphothreonine. Phosphoserine occurs at positions 817 and 852.

The cofactor is Ca(2+). Post-translationally, phosphorylated on Ser-197 by active myristoylated kinase AKT2; insulin-stimulated phosphorylation by AKT2 regulates SLC2A4/GLUT4 translocation into the plasma membrane.

Its subcellular location is the cytoplasmic vesicle membrane. It is found in the cytoplasm. The protein resides in the cell cortex. It localises to the cell membrane. The protein localises to the cell projection. Its subcellular location is the ruffle. In terms of biological role, required for insulin-stimulated glucose transport and glucose transporter SLC2A4/GLUT4 translocation from intracellular glucose storage vesicle (GSV) to the plasma membrane (PM) in adipocytes. Binds phospholipid membranes in a calcium-dependent manner and is necessary for the optimal membrane fusion between SLC2A4/GLUT4 GSV and the PM. The sequence is that of C2 domain-containing protein 5 (C2CD5) from Homo sapiens (Human).